The following is a 359-amino-acid chain: Type-1 angiotensin II receptor B (359 aa).

Residues 1 to 25 are Extracellular-facing; the sequence is MILNSSIEDGIKRIQDDCPKAGRHN. N-linked (GlcNAc...) asparagine glycosylation occurs at Asn4. Residues Gln15 and Asp17 each contribute to the angiotensin II site. 2 disulfide bridges follow: Cys18/Cys274 and Cys101/Cys180. Residues 26 to 55 form a helical membrane-spanning segment; it reads YIFVMIPTLYSIIFVVGIFGNSLVVIVIYF. Over 56–61 the chain is Cytoplasmic; that stretch reads YMKLKT. A helical transmembrane segment spans residues 62 to 89; that stretch reads VASVFLLNLALADLCFLLTLPLWAVYTA. Residues 90–98 lie on the Extracellular side of the membrane; sequence MEYQWPFGN. A helical membrane pass occupies residues 99–125; it reads HLCKIASASVSFNLYASVFLLTCLSID. The Cytoplasmic portion of the chain corresponds to 126–141; the sequence is RYLAIVHPMKSRLRRT. The helical transmembrane segment at 142–165 threads the bilayer; sequence MLVAKVTCIIIWLMAGLASLPAVI. Over 166–190 the chain is Extracellular; sequence HRNVYFIENTNITVCAFHYESQNST. Angiotensin II is bound at residue Arg167. N-linked (GlcNAc...) asparagine glycosylation occurs at Asn176. The angiotensin II site is built by Phe182, His183, and Tyr184. An N-linked (GlcNAc...) asparagine glycan is attached at Asn188. Residues 191 to 216 form a helical membrane-spanning segment; that stretch reads LPIGLGLTKNILGFVFPFVIILTSYT. Position 199 (Lys199) interacts with angiotensin II. Topologically, residues 217–239 are cytoplasmic; sequence LIWKALKKAYKIQKNTPRNDDIF. Residues 240–268 form a helical membrane-spanning segment; that stretch reads RIIMAIVLFFFFSWVPHQIFSFLDVLIQL. Residues 269–278 lie on the Extracellular side of the membrane; it reads GVIHDCEIAD. Residues 279–304 traverse the membrane as a helical segment; it reads VVDTAMPITICIAYFNNCLNPLFYGF. Over 305–359 the chain is Cytoplasmic; that stretch reads LGKKFKRYFLQLLKYIPPKARSHAGLSTKMSTLSYRPSDNMSSSARKSAYCFEVE. Cys355 carries the S-palmitoyl cysteine lipid modification.

This sequence belongs to the G-protein coupled receptor 1 family. Interacts with MAS1. Interacts with ARRB1. Interacts with FLNA (via filamin repeat 21); increases PKA-mediated phosphorylation of FLNA. Post-translationally, C-terminal Ser or Thr residues may be phosphorylated.

It is found in the cell membrane. Functionally, receptor for angiotensin II, a vasoconstricting peptide, which acts as a key regulator of blood pressure and sodium retention by the kidney. The activated receptor in turn couples to G-alpha proteins G(q) (GNAQ, GNA11, GNA14 or GNA15) and thus activates phospholipase C and increases the cytosolic Ca(2+) concentrations, which in turn triggers cellular responses such as stimulation of protein kinase C. The protein is Type-1 angiotensin II receptor B (Agtr1b) of Mus musculus (Mouse).